A 51-amino-acid polypeptide reads, in one-letter code: Sperm protamine P1 (51 aa).

Disulfide bonds link cysteine 7–cysteine 15 and cysteine 38–cysteine 48.

The protein belongs to the protamine P1 family. In terms of assembly, cross-linked by interchain disulfide bonds around the DNA-helix. Post-translationally, phosphorylated by SRPK1. Testis.

Its subcellular location is the nucleus. It is found in the chromosome. Its function is as follows. Protamines substitute for histones in the chromatin of sperm during the haploid phase of spermatogenesis. They compact sperm DNA into a highly condensed, stable and inactive complex. The sequence is that of Sperm protamine P1 (Prm1) from Rattus norvegicus (Rat).